Here is a 200-residue protein sequence, read N- to C-terminus: Probable nicotinate-nucleotide adenylyltransferase (200 aa).

The protein belongs to the NadD family.

It catalyses the reaction nicotinate beta-D-ribonucleotide + ATP + H(+) = deamido-NAD(+) + diphosphate. It participates in cofactor biosynthesis; NAD(+) biosynthesis; deamido-NAD(+) from nicotinate D-ribonucleotide: step 1/1. Catalyzes the reversible adenylation of nicotinate mononucleotide (NaMN) to nicotinic acid adenine dinucleotide (NaAD). The chain is Probable nicotinate-nucleotide adenylyltransferase from Clostridium acetobutylicum (strain ATCC 824 / DSM 792 / JCM 1419 / IAM 19013 / LMG 5710 / NBRC 13948 / NRRL B-527 / VKM B-1787 / 2291 / W).